A 365-amino-acid polypeptide reads, in one-letter code: Tubulin-like protein CetZ (365 aa).

Residues 10-14 (QCGGK), 103-105 (GTG), Glu-136, Asn-163, and Asn-181 contribute to the GTP site.

Belongs to the CetZ family.

It localises to the cytoplasm. Its function is as follows. Involved in cell shape control. In Pyrococcus abyssi (strain GE5 / Orsay), this protein is Tubulin-like protein CetZ.